The following is a 674-amino-acid chain: Phosphopantothenoylcysteine decarboxylase subunit VHS3 (674 aa).

5 disordered regions span residues 1 to 164 (MTNK…SILS), 190 to 230 (LNSD…RPSV), 348 to 368 (QHNS…NITG), 384 to 426 (TSSN…SNVV), and 575 to 674 (VSAG…LQRS). Over residues 15-81 (ASNTLSGAEQ…TSGAVVSNTP (67 aa)) the composition is skewed to polar residues. The residue at position 90 (threonine 90) is a Phosphothreonine. Residues 106–116 (EQTPPNQVARQ) show a composition bias toward polar residues. Basic and acidic residues predominate over residues 137-150 (NLKDINTKVPKDGE). The segment covering 152-164 (SASSFSTPTSILS) has biased composition (polar residues). A compositionally biased stretch (basic and acidic residues) spans 198–212 (SPRKEHPHFYVEDPL). A compositionally biased stretch (low complexity) spans 214-230 (TPSVRSRSNSTSPRPSV). The segment covering 351-368 (SIDTSFNSTNSNAGNITG) has biased composition (polar residues). A compositionally biased stretch (low complexity) spans 384–395 (TSSNSAASQTNN). Residues 403–426 (MASTTGFPSTLGGSRTYSNSSNVV) are compositionally biased toward polar residues. The span at 580–591 (EEEEDEDNDEED) shows a compositional bias: acidic residues. Basic and acidic residues predominate over residues 592–602 (DNKKNDTGGKD). Acidic residues predominate over residues 603 to 660 (EDNDDDDDDDDDDDDDDDDDDDDDDDDDDDDDDDDDDDDDDDDDDDDDEDDEDEDEDD). The span at 661 to 674 (EGKKKEDKGGLQRS) shows a compositional bias: basic and acidic residues.

Belongs to the HFCD (homooligomeric flavin containing Cys decarboxylase) superfamily. As to quaternary structure, interacts with the C-terminal domain of PPZ1. Component of the phosphopantothenoylcysteine decarboxylase (PPCDC) complex, a heterotrimer composed of CAB3, SIS2 and VHS3.

Component of the phosphopantothenoylcysteine decarboxylase (PPCDC) involved in the coenzyme A synthesis. Acts as an inhibitory subunit of protein phosphatase PPZ1, which is involved in many cellular processes such as G1-S transition or salt tolerance. In Saccharomyces cerevisiae (strain ATCC 204508 / S288c) (Baker's yeast), this protein is Phosphopantothenoylcysteine decarboxylase subunit VHS3 (VHS3).